We begin with the raw amino-acid sequence, 191 residues long: Phosphoheptose isomerase (191 aa).

The SIS domain maps to 37-191; that stretch reads IAESFKQDGK…IIQLIEKEME (155 aa). 52-54 is a binding site for substrate; that stretch reads NGG. Zn(2+) contacts are provided by His61 and Glu65. Substrate-binding positions include Glu65, 93-94, 119-121, Ser124, and Gln172; these read ND and STS. Residues Gln172 and His180 each contribute to the Zn(2+) site.

It belongs to the SIS family. GmhA subfamily. As to quaternary structure, homotetramer. It depends on Zn(2+) as a cofactor.

The protein resides in the cytoplasm. The enzyme catalyses 2 D-sedoheptulose 7-phosphate = D-glycero-alpha-D-manno-heptose 7-phosphate + D-glycero-beta-D-manno-heptose 7-phosphate. The protein operates within carbohydrate biosynthesis; D-glycero-D-manno-heptose 7-phosphate biosynthesis; D-glycero-alpha-D-manno-heptose 7-phosphate and D-glycero-beta-D-manno-heptose 7-phosphate from sedoheptulose 7-phosphate: step 1/1. Its pathway is bacterial outer membrane biogenesis; LPS core biosynthesis. Catalyzes the isomerization of sedoheptulose 7-phosphate in D-glycero-D-manno-heptose 7-phosphate. In Vibrio vulnificus (strain CMCP6), this protein is Phosphoheptose isomerase.